Consider the following 642-residue polypeptide: Arginine--tRNA ligase (642 aa).

The 'HIGH' region motif lies at 133 to 143 (VNPTKPLHMGH).

This sequence belongs to the class-I aminoacyl-tRNA synthetase family.

It localises to the cytoplasm. It carries out the reaction tRNA(Arg) + L-arginine + ATP = L-arginyl-tRNA(Arg) + AMP + diphosphate. The sequence is that of Arginine--tRNA ligase from Thermococcus kodakarensis (strain ATCC BAA-918 / JCM 12380 / KOD1) (Pyrococcus kodakaraensis (strain KOD1)).